Reading from the N-terminus, the 570-residue chain is Periplasmic trehalase (570 aa).

The signal sequence occupies residues 1–34; sequence MIPPEIRRSVLLQKAIKLALAGTLLTFASFSATA. Residues Arg-159, 166–167, Asn-203, 212–214, 284–286, and Gly-317 contribute to the substrate site; these read WD, RSQ, and RPE. Residues Asp-319 and Glu-503 each act as proton donor/acceptor in the active site. Glu-518 lines the substrate pocket. The disordered stretch occupies residues 544–570; that stretch reads KPCDSVPSTRPASLSATPTKTPSAATQ. A compositionally biased stretch (low complexity) spans 554–570; sequence PASLSATPTKTPSAATQ.

The protein belongs to the glycosyl hydrolase 37 family. Monomer.

It localises to the periplasm. The catalysed reaction is alpha,alpha-trehalose + H2O = alpha-D-glucose + beta-D-glucose. Functionally, provides the cells with the ability to utilize trehalose at high osmolarity by splitting it into glucose molecules that can subsequently be taken up by the phosphotransferase-mediated uptake system. This is Periplasmic trehalase from Salmonella paratyphi A (strain AKU_12601).